A 283-amino-acid polypeptide reads, in one-letter code: Movement protein (283 aa).

The segment at 233 to 283 (SVKRTKSENTPGKRRVNVDSVSLGLGKGKSVSAKNEDTESVFDDGILDSDS) is disordered. The span at 270–283 (TESVFDDGILDSDS) shows a compositional bias: acidic residues.

Belongs to the tobamovirus movement protein family.

The protein resides in the host cytoplasm. The protein localises to the host cytoskeleton. Its subcellular location is the host cell junction. It is found in the host plasmodesma. In terms of biological role, transports viral genome to neighboring plant cells directly through plasmosdesmata, without any budding. The movement protein allows efficient cell to cell propagation, by bypassing the host cell wall barrier. Forms a ribonucleoprotein complex with viral RNA. Binds microtubules and modulates microtubule stability. Can bind double-stranded DNA. The protein is Movement protein (MP) of Crotalaria juncea (Sunn hemp).